Reading from the N-terminus, the 218-residue chain is MKIVIADDHAVVRTGFSMILNYQEDMEVVATAADGVEAYQKVLEHRPDVLILDLSMPPGESGLIATSKISESFPETKILILTMFDDEEYLFHMLKSGAKGYILKNSPDEQLILAVRTVYQGETYVDMKLTTSLVNEFVNQSQTDEVSSSSDPFKILSKRELEILPLIAKGYGNKDIAEKLFVSVKTVEAHKTHIMTKLNLKSKPELVEYALKKKLLEF.

The Response regulatory domain maps to 2-119 (KIVIADDHAV…QLILAVRTVY (118 aa)). The residue at position 53 (D53) is a 4-aspartylphosphate. Positions 149 to 214 (SSDPFKILSK…ELVEYALKKK (66 aa)) constitute an HTH luxR-type domain. Positions 173-192 (NKDIAEKLFVSVKTVEAHKT) form a DNA-binding region, H-T-H motif.

Phosphorylated by NreB.

It localises to the cytoplasm. Its function is as follows. Member of the two-component regulatory system NreB/NreC involved in the control of dissimilatory nitrate/nitrite reduction in response to oxygen. Phosphorylated NreC binds to a GC-rich palindromic sequence at the promoters of the nitrate (narGHJI) and nitrite (nir) reductase operons, as well as the putative nitrate transporter gene narT, and activates their expression. The chain is Oxygen regulatory protein NreC (nreC) from Staphylococcus epidermidis (strain ATCC 12228 / FDA PCI 1200).